Consider the following 318-residue polypeptide: NADH-ubiquinone oxidoreductase chain 1 (318 aa).

8 consecutive transmembrane segments (helical) span residues 2 to 22 (FMIN…FLTL), 70 to 90 (MFII…SPLP), 100 to 120 (LGVL…LWSG), 136 to 156 (VAQT…VLLM), 172 to 192 (LWLL…TLAE), 222 to 242 (LFFL…AILF), 253 to 273 (ELYT…FLWI), and 294 to 314 (LPLT…TASI).

It belongs to the complex I subunit 1 family. In terms of assembly, core subunit of respiratory chain NADH dehydrogenase (Complex I) which is composed of 45 different subunits.

The protein resides in the mitochondrion inner membrane. The enzyme catalyses a ubiquinone + NADH + 5 H(+)(in) = a ubiquinol + NAD(+) + 4 H(+)(out). Its function is as follows. Core subunit of the mitochondrial membrane respiratory chain NADH dehydrogenase (Complex I) which catalyzes electron transfer from NADH through the respiratory chain, using ubiquinone as an electron acceptor. Essential for the catalytic activity and assembly of complex I. The protein is NADH-ubiquinone oxidoreductase chain 1 (MT-ND1) of Balaenoptera musculus (Blue whale).